Here is a 267-residue protein sequence, read N- to C-terminus: tRNA pseudouridine synthase A (267 aa).

Asp51 acts as the Nucleophile in catalysis. Residue Tyr109 participates in substrate binding.

Belongs to the tRNA pseudouridine synthase TruA family. As to quaternary structure, homodimer.

The catalysed reaction is uridine(38/39/40) in tRNA = pseudouridine(38/39/40) in tRNA. Its function is as follows. Formation of pseudouridine at positions 38, 39 and 40 in the anticodon stem and loop of transfer RNAs. The sequence is that of tRNA pseudouridine synthase A from Staphylococcus aureus (strain MSSA476).